The sequence spans 142 residues: Hemoglobin subunit alpha-1 (142 aa).

The region spanning 2–142 (LLSADDKKHI…VSTVLTSKYR (141 aa)) is the Globin domain. O2 is bound at residue histidine 59. Heme b is bound at residue histidine 88.

This sequence belongs to the globin family. In terms of assembly, heterotetramer of two alpha chains and two beta chains. In terms of tissue distribution, red blood cells.

Its function is as follows. Involved in oxygen transport from the lung to the various peripheral tissues. The sequence is that of Hemoglobin subunit alpha-1 (hba1) from Xenopus laevis (African clawed frog).